Here is a 766-residue protein sequence, read N- to C-terminus: LPS-assembly protein LptD (766 aa).

Positions Met-1–Ala-18 are cleaved as a signal peptide.

This sequence belongs to the LptD family. In terms of assembly, component of the lipopolysaccharide transport and assembly complex. Interacts with LptE and LptA.

The protein resides in the cell outer membrane. Its function is as follows. Together with LptE, is involved in the assembly of lipopolysaccharide (LPS) at the surface of the outer membrane. This is LPS-assembly protein LptD from Shewanella denitrificans (strain OS217 / ATCC BAA-1090 / DSM 15013).